Reading from the N-terminus, the 336-residue chain is Carbamoyl dehydratase HypE (336 aa).

Position 336 is an S-carbamoylcysteine; by HypF; alternate (Cys336). Cys336 is modified (S-cyanocysteine; by autocatalysis; alternate).

This sequence belongs to the HypE family. In terms of assembly, homodimer. Forms a complex with HypF. Also forms a complex with HypC, or HybG, and HypD. Post-translationally, modified by HypF, which adds a carboxamido group to the thiolate of the C-terminal cysteine, yielding a protein-S-carboxamide. The carboxamido group is then dehydrated by HypE itself to yield a protein-thiocyanate.

It catalyses the reaction C-terminal S-carboxamide-L-cysteinyl-[HypE protein] + ATP = C-terminal S-cyanate-L-cysteinyl-[HypE protein] + ADP + phosphate + H(+). Its pathway is protein modification; [NiFe] hydrogenase maturation. In terms of biological role, involved in the maturation of [NiFe] hydrogenases. Along with HypF, it catalyzes the synthesis of the CN ligands of the active site iron of [NiFe]-hydrogenases. HypE catalyzes the ATP-dependent dehydration of the carboxamido group attached to its C-terminal cysteine to a cyano group. The cyano group is then transferred from HypE to the HypC-HypD complex or the HybG-HypD complex. The polypeptide is Carbamoyl dehydratase HypE (Escherichia coli (strain K12)).